The following is a 485-amino-acid chain: MNEAVTIRGKERYKSGVMEYKKMGYWEPDYEPKDTDVIALFRVTPQDGVDPIEAAAAVAGESSTATWTVVWTDRLTAAEKYRAKCYRVDPVPNSPGQYFAYIAYDLDLFEPGSISNLTASIIGNVFGFKPLKALRLEDMRLPIAYVKTFQGPATGIVVERERMDKFGRPLLGATVKPKLGLSGRNYGRVVYEALKGGLDFTKDDENINSQPFMHWRERFQYCMEAVNKAQAQTGEIKGTYLNVTAATMEDMYERAEYAKELGSIIVMIDLVIGYTAIQSMAKWARKNDMILHLHRAGHSTYTRQRNHGVSFRVIAKWMRLAGVDHIHAGTVVGKLEGDPATTKGYYDICREDFNPMTLENGLFFDQNWASLNKLMPVASGGIHAGQMHQLLHLLGEDVVLQFGGGTIGHPMGIAAGATANRVALEAMILARNEGRDYLHEGPEILAKAAQTCTPLKAALDTWKNVTFNYESTDTPDYAPTPSVSV.

Substrate-binding residues include Asn124 and Thr174. The active-site Proton acceptor is the Lys176. Lys178 is a substrate binding site. Mg(2+)-binding residues include Lys202, Asp204, and Glu205. Residue Lys202 is modified to N6-carboxylysine. Residue His294 is the Proton acceptor of the active site. Residues Arg295, His327, and Ser379 each contribute to the substrate site.

It belongs to the RuBisCO large chain family. Type I subfamily. As to quaternary structure, heterohexadecamer of 8 large chains and 8 small chains. Mg(2+) is required as a cofactor.

It carries out the reaction 2 (2R)-3-phosphoglycerate + 2 H(+) = D-ribulose 1,5-bisphosphate + CO2 + H2O. The catalysed reaction is D-ribulose 1,5-bisphosphate + O2 = 2-phosphoglycolate + (2R)-3-phosphoglycerate + 2 H(+). Its function is as follows. RuBisCO catalyzes two reactions: the carboxylation of D-ribulose 1,5-bisphosphate, the primary event in carbon dioxide fixation, as well as the oxidative fragmentation of the pentose substrate. Both reactions occur simultaneously and in competition at the same active site. The protein is Ribulose bisphosphate carboxylase large chain of Rhodopseudomonas palustris (strain TIE-1).